The primary structure comprises 410 residues: Arginine deiminase (410 aa).

The active-site Amidino-cysteine intermediate is C399.

The protein belongs to the arginine deiminase family.

The protein resides in the cytoplasm. It catalyses the reaction L-arginine + H2O = L-citrulline + NH4(+). It functions in the pathway amino-acid degradation; L-arginine degradation via ADI pathway; carbamoyl phosphate from L-arginine: step 1/2. This Listeria monocytogenes serovar 1/2a (strain ATCC BAA-679 / EGD-e) protein is Arginine deiminase.